The primary structure comprises 624 residues: Probable Xaa-Pro aminopeptidase P (624 aa).

Mn(2+) contacts are provided by D421, D432, E530, and E544.

This sequence belongs to the peptidase M24B family. Requires Mn(2+) as cofactor.

It catalyses the reaction Release of any N-terminal amino acid, including proline, that is linked to proline, even from a dipeptide or tripeptide.. Functionally, catalyzes the removal of a penultimate prolyl residue from the N-termini of peptides. In Arthroderma otae (strain ATCC MYA-4605 / CBS 113480) (Microsporum canis), this protein is Probable Xaa-Pro aminopeptidase P (AMPP).